The sequence spans 863 residues: Leucine--tRNA ligase (863 aa).

The short motif at 42–52 is the 'HIGH' region element; sequence PYPSGRLHMGH. Positions 622 to 626 match the 'KMSKS' region motif; the sequence is KMSKS. K625 lines the ATP pocket.

Belongs to the class-I aminoacyl-tRNA synthetase family.

The protein resides in the cytoplasm. The catalysed reaction is tRNA(Leu) + L-leucine + ATP = L-leucyl-tRNA(Leu) + AMP + diphosphate. This Shewanella denitrificans (strain OS217 / ATCC BAA-1090 / DSM 15013) protein is Leucine--tRNA ligase.